A 247-amino-acid polypeptide reads, in one-letter code: NAD-dependent protein deacetylase (247 aa).

Residues 1–247 (METFKSILHE…EFARSLGMKK (247 aa)) enclose the Deacetylase sirtuin-type domain. NAD(+) contacts are provided by Ala-20, Thr-24, Phe-31, Arg-32, Gln-100, Ile-102, Asp-103, and His-118. Phe-31 serves as a coordination point for nicotinamide. The nicotinamide site is built by Ile-102 and Asp-103. Residue His-118 is the Proton acceptor of the active site. The Zn(2+) site is built by Cys-126, Cys-129, Cys-146, and Cys-156. Thr-192, Ser-193, Asn-218, and Ile-236 together coordinate NAD(+).

Belongs to the sirtuin family. Class U subfamily. It depends on Zn(2+) as a cofactor.

It is found in the cytoplasm. It catalyses the reaction N(6)-acetyl-L-lysyl-[protein] + NAD(+) + H2O = 2''-O-acetyl-ADP-D-ribose + nicotinamide + L-lysyl-[protein]. In terms of biological role, NAD-dependent protein deacetylase which modulates the activities of several enzymes which are inactive in their acetylated form. This Bacillus subtilis (strain 168) protein is NAD-dependent protein deacetylase.